The chain runs to 1022 residues: Sodium-dependent transporter snf-12 (1022 aa).

Residues 1-165 lie on the Cytoplasmic side of the membrane; the sequence is MNGEWKSALR…RRELWRTQKD (165 aa). A helical transmembrane segment spans residues 166–185; that stretch reads FFLSCLGFMVGVGHTMRFPA. The Extracellular portion of the chain corresponds to 186–192; that stretch reads KVYQHGG. Residues 193–213 traverse the membrane as a helical segment; that stretch reads GVFFIPYLFSLIFFGLPLVFL. At 214-241 the chain is on the cytoplasmic side; that stretch reads HLSLGQYTGQAANTAFQRLMPIGSGVGW. Residues 242-262 traverse the membrane as a helical segment; sequence ALVVIAIPVAVYYNIIVAWAI. The Extracellular segment spans residues 263–337; it reads HYFFQSAKGL…DFALGPLQSH (75 aa). The helical transmembrane segment at 338-358 threads the bilayer; it reads LVLSLAAAWLLVFFGVFKGLG. Residue Ser-359 is a topological domain, cytoplasmic. A helical membrane pass occupies residues 360-380; it reads IAQTMNVTATVPYLLLSILLL. Residues 381–412 are Extracellular-facing; the sequence is RGISLPGANKGLTFLFTVDSTKLWKWQIWKSA. The chain crosses the membrane as a helical span at residues 413–433; it reads AEQVFYELGIDAGPLISMAAF. Residues 434–444 lie on the Cytoplasmic side of the membrane; that stretch reads SRYRNNIYRDS. Residues 445-465 form a helical membrane-spanning segment; sequence VLLVIMDALTSCLSGMVIFSF. Residues 466-498 are Extracellular-facing; sequence VGFIASESNSNVNDVLKHDPLYLSFTVYPGVTS. The chain crosses the membrane as a helical span at residues 499-519; sequence FMYWGGLWATLFFGMLVLAAI. The Cytoplasmic portion of the chain corresponds to 520-550; that stretch reads DAEFAWLEMIASAFMNHFSMKNKAVENRLLA. The chain crosses the membrane as a helical span at residues 551–571; it reads FLCLAGFFLGLPLCAQGGIFV. The Extracellular segment spans residues 572–584; that stretch reads FHAIENLNANWNS. Residues 585–605 traverse the membrane as a helical segment; the sequence is FSLALLSVAIVCYVYGIDNYL. Residues 606-641 are Cytoplasmic-facing; sequence TDISAMLRVPRIQISKATRLKEKLIYFFGPGGIYIK. The helical transmembrane segment at 642–662 threads the bilayer; it reads FSLCFICPVILTVLLVASVLG. The Extracellular portion of the chain corresponds to 663–677; the sequence is YQRISFAGRPIPIDY. The helical transmembrane segment at 678-698 threads the bilayer; the sequence is EIVAWIVMIGPLLVVPLVAFM. Over 699-1022 the chain is Cytoplasmic; sequence QIRQIRNEGK…RPKPIDMPPK (324 aa). 2 disordered regions span residues 867 to 948 and 995 to 1022; these read RIPN…SSDD and IYDQEQKNGRSKVLSQLKRPKPIDMPPK. A compositionally biased stretch (pro residues) spans 893–907; the sequence is SDPPVPTSPLPPPPK. A compositionally biased stretch (low complexity) spans 933–943; sequence DDSPSISNSSD.

Belongs to the sodium:neurotransmitter symporter (SNF) (TC 2.A.22) family. As to quaternary structure, may interact with STAT family transcription factor sta-2; the interaction is probably direct.

Its subcellular location is the membrane. The protein resides in the cytoplasm. It is found in the vesicle. Its function is as follows. Probably mediates sodium-dependent uptake of unknown small molecule(s). By positively modulating expression, in the epidermis, of antimicrobial peptides such as nlp-29, plays a role in resistance to fungal infection and in the response to physical wounding and phorbol ester PMA treatment. Role in response to wounding of the epidermis may be facilitated by recruitment of snf-12 to the wound site by microtubule-dependent vesicle trafficking. Functions cell autonomously in the epidermis, in concert with STAT transcription factor sta-2, probably acting at vesicular membranes, downstream of a p38 MAPK/pmk-1 pathway. The chain is Sodium-dependent transporter snf-12 from Caenorhabditis elegans.